The primary structure comprises 465 residues: Ribulose bisphosphate carboxylase large chain (465 aa).

Position 4 is an N6,N6,N6-trimethyllysine (K4). Substrate-binding residues include N113 and T163. K165 (proton acceptor) is an active-site residue. Residue K167 participates in substrate binding. Mg(2+)-binding residues include K191, D193, and E194. At K191 the chain carries N6-carboxylysine. H284 (proton acceptor) is an active-site residue. Substrate contacts are provided by R285, H317, and S369.

The protein belongs to the RuBisCO large chain family. Type I subfamily. In terms of assembly, heterohexadecamer of 8 large chains and 8 small chains; disulfide-linked. The disulfide link is formed within the large subunit homodimers. Mg(2+) is required as a cofactor. Post-translationally, the disulfide bond which can form in the large chain dimeric partners within the hexadecamer appears to be associated with oxidative stress and protein turnover.

It localises to the plastid. The protein resides in the chloroplast. The enzyme catalyses 2 (2R)-3-phosphoglycerate + 2 H(+) = D-ribulose 1,5-bisphosphate + CO2 + H2O. The catalysed reaction is D-ribulose 1,5-bisphosphate + O2 = 2-phosphoglycolate + (2R)-3-phosphoglycerate + 2 H(+). In terms of biological role, ruBisCO catalyzes two reactions: the carboxylation of D-ribulose 1,5-bisphosphate, the primary event in carbon dioxide fixation, as well as the oxidative fragmentation of the pentose substrate in the photorespiration process. Both reactions occur simultaneously and in competition at the same active site. The chain is Ribulose bisphosphate carboxylase large chain from Combretum indicum (Rangoon creeper).